Consider the following 423-residue polypeptide: Elongation factor 1-alpha (423 aa).

The tr-type G domain maps to 5 to 211 (KEHINLAFIG…DNLEPPEKPT (207 aa)). Residues 14 to 21 (GHVDHGKS) form a G1 region. Residue 14–21 (GHVDHGKS) participates in GTP binding. Residue S21 participates in Mg(2+) binding. The segment at 60–64 (GVTID) is G2. Residues 81–84 (DCPG) are G3. GTP-binding positions include 81–85 (DCPGH) and 136–139 (NKMD). Positions 136-139 (NKMD) are G4. A G5 region spans residues 175-177 (SAF).

It belongs to the TRAFAC class translation factor GTPase superfamily. Classic translation factor GTPase family. EF-Tu/EF-1A subfamily.

Its subcellular location is the cytoplasm. It carries out the reaction GTP + H2O = GDP + phosphate + H(+). In terms of biological role, GTP hydrolase that promotes the GTP-dependent binding of aminoacyl-tRNA to the A-site of ribosomes during protein biosynthesis. The sequence is that of Elongation factor 1-alpha from Methanopyrus kandleri (strain AV19 / DSM 6324 / JCM 9639 / NBRC 100938).